Reading from the N-terminus, the 190-residue chain is Myophilin (190 aa).

Residues 1 to 23 are disordered; sequence MSNVPPPSGLSYQVKKKLEGKRD. A Calponin-homology (CH) domain is found at 24-130; it reads KDQENEALEW…RTLFALGRTC (107 aa). The stretch at 165–189 is one Calponin-like repeat; it reads VSLQYGSNKGASQAGINMGKQRMIM.

This sequence belongs to the calponin family. As to expression, muscle specific.

The chain is Myophilin from Echinococcus granulosus (Hydatid tapeworm).